The following is a 212-amino-acid chain: Sclerostin (212 aa).

The signal sequence occupies residues Met1 to Gly23. The N-linked (GlcNAc...) asparagine glycan is linked to Asn52. Disulfide bonds link Cys79/Cys133, Cys93/Cys147, Cys104/Cys164, and Cys108/Cys166. The CTCK domain maps to Glu81–Arg171. Asn174 carries N-linked (GlcNAc...) asparagine glycosylation. The tract at residues Lys179–Tyr212 is disordered. A compositionally biased stretch (basic residues) spans Thr190–Lys202.

Belongs to the sclerostin family. As to quaternary structure, interacts with LRP4 (via the extracellular domain); the interaction facilitates the inhibition of Wnt signaling. Interacts with LRP5 (via the first two YWTD-EGF repeat domains); the interaction inhibits Wnt-mediated signaling. Interacts with LRP6.

Its subcellular location is the secreted. The protein localises to the extracellular space. It is found in the extracellular matrix. Negative regulator of bone growth that acts through inhibition of Wnt signaling and bone formation. In Bos taurus (Bovine), this protein is Sclerostin.